A 36-amino-acid polypeptide reads, in one-letter code: Photosystem I reaction center subunit VIII (36 aa).

A helical transmembrane segment spans residues 8–28 (SLFVPLVGLVFPAIAMASLFL).

The protein belongs to the PsaI family.

The protein localises to the plastid. It localises to the chloroplast thylakoid membrane. May help in the organization of the PsaL subunit. This chain is Photosystem I reaction center subunit VIII, found in Brassica oleracea (Wild cabbage).